A 488-amino-acid chain; its full sequence is Probable glycine dehydrogenase (decarboxylating) subunit 2 (488 aa).

N6-(pyridoxal phosphate)lysine is present on Lys-274.

Belongs to the GcvP family. C-terminal subunit subfamily. In terms of assembly, the glycine cleavage system is composed of four proteins: P, T, L and H. In this organism, the P 'protein' is a heterodimer of two subunits. The cofactor is pyridoxal 5'-phosphate.

It catalyses the reaction N(6)-[(R)-lipoyl]-L-lysyl-[glycine-cleavage complex H protein] + glycine + H(+) = N(6)-[(R)-S(8)-aminomethyldihydrolipoyl]-L-lysyl-[glycine-cleavage complex H protein] + CO2. The glycine cleavage system catalyzes the degradation of glycine. The P protein binds the alpha-amino group of glycine through its pyridoxal phosphate cofactor; CO(2) is released and the remaining methylamine moiety is then transferred to the lipoamide cofactor of the H protein. This Listeria monocytogenes serotype 4b (strain F2365) protein is Probable glycine dehydrogenase (decarboxylating) subunit 2.